Reading from the N-terminus, the 207-residue chain is Small ribosomal subunit protein uS4c (207 aa).

The segment at 20 to 52 (GFSKKIDRNHTPPGQHGWKKKASDQKKSKESQY) is disordered. Positions 40 to 52 (KASDQKKSKESQY) are enriched in basic and acidic residues. Residues 97 to 158 (MRLDNIIYRL…NSQQLIKNYL (62 aa)) form the S4 RNA-binding domain.

This sequence belongs to the universal ribosomal protein uS4 family. In terms of assembly, part of the 30S ribosomal subunit. Contacts protein S5. The interaction surface between S4 and S5 is involved in control of translational fidelity.

It localises to the plastid. Its function is as follows. One of the primary rRNA binding proteins, it binds directly to 16S rRNA where it nucleates assembly of the body of the 30S subunit. Functionally, with S5 and S12 plays an important role in translational accuracy. This is Small ribosomal subunit protein uS4c (rps4) from Prototheca wickerhamii.